Consider the following 122-residue polypeptide: Large ribosomal subunit protein uL14c (122 aa).

This sequence belongs to the universal ribosomal protein uL14 family. In terms of assembly, part of the 50S ribosomal subunit.

It localises to the plastid. The protein localises to the chloroplast. Binds to 23S rRNA. This is Large ribosomal subunit protein uL14c from Cucumis sativus (Cucumber).